Consider the following 279-residue polypeptide: 30 kDa ribonucleoprotein, chloroplastic (279 aa).

The RRM 1 domain maps to 87–165 (LKIFVGNLLF…RALRVNSGPP (79 aa)). Positions 156 to 187 (RALRVNSGPPPEKRENSSFRENSSFRGGSRGG) are disordered. The tract at residues 166–193 (PEKRENSSFRENSSFRGGSRGGGSFDSS) is linker (Gly-rich). One can recognise an RRM 2 domain in the interval 194–272 (NRVYVGNLAW…RAIRVSPAEA (79 aa)).

As to expression, expressed at high levels in the leaves and seedlings, and lower levels are seen in the stems and roots.

The protein localises to the plastid. The protein resides in the chloroplast. Could be involved in splicing and/or processing of chloroplast RNA's. In Nicotiana plumbaginifolia (Leadwort-leaved tobacco), this protein is 30 kDa ribonucleoprotein, chloroplastic.